The primary structure comprises 611 residues: O-fucosyltransferase 8 (611 aa).

A disordered region spans residues 1–29 (MGKQGSPRSPRPETIDKEEKFGRRSLDSL). Residues 10–26 (PRPETIDKEEKFGRRSL) show a composition bias toward basic and acidic residues. Residues 78 to 98 (IVLMISVTGFIFCMDSIMVSI) form a helical; Signal-anchor for type II membrane protein membrane-spanning segment. 3 N-linked (GlcNAc...) asparagine glycosylation sites follow: asparagine 115, asparagine 216, and asparagine 270. 386 to 388 (HLR) contributes to the substrate binding site. An N-linked (GlcNAc...) asparagine glycan is attached at asparagine 506.

It belongs to the glycosyltransferase GT106 family.

The protein localises to the membrane. Its pathway is glycan metabolism. This chain is O-fucosyltransferase 8, found in Arabidopsis thaliana (Mouse-ear cress).